Consider the following 413-residue polypeptide: Serine/threonine transporter SstT (413 aa).

A run of 9 helical transmembrane segments spans residues 15–35, 48–68, 82–102, 141–161, 178–198, 216–236, 290–310, 330–350, and 357–377; these read NIVI…TLAP, FVSA…AASI, VIVL…VMSF, ALMT…GLGL, CISA…FGLV, LLAV…PLIV, IPLG…VLTL, LVAA…LLLI, and FGIS…IGVV.

The protein belongs to the dicarboxylate/amino acid:cation symporter (DAACS) (TC 2.A.23) family.

It localises to the cell inner membrane. The enzyme catalyses L-serine(in) + Na(+)(in) = L-serine(out) + Na(+)(out). It catalyses the reaction L-threonine(in) + Na(+)(in) = L-threonine(out) + Na(+)(out). Its function is as follows. Involved in the import of serine and threonine into the cell, with the concomitant import of sodium (symport system). This chain is Serine/threonine transporter SstT, found in Aliivibrio fischeri (strain ATCC 700601 / ES114) (Vibrio fischeri).